We begin with the raw amino-acid sequence, 199 residues long: Probable chemoreceptor glutamine deamidase CheD (199 aa).

It belongs to the CheD family.

It carries out the reaction L-glutaminyl-[protein] + H2O = L-glutamyl-[protein] + NH4(+). In terms of biological role, probably deamidates glutamine residues to glutamate on methyl-accepting chemotaxis receptors (MCPs), playing an important role in chemotaxis. The sequence is that of Probable chemoreceptor glutamine deamidase CheD from Cereibacter sphaeroides (Rhodobacter sphaeroides).